The sequence spans 303 residues: Lipoyl synthase (303 aa).

[4Fe-4S] cluster is bound by residues C34, C39, C45, C60, C64, C67, and S273. One can recognise a Radical SAM core domain in the interval 46-262; that stretch reads WSKKHATVMI…ERVARTKGFL (217 aa).

The protein belongs to the radical SAM superfamily. Lipoyl synthase family. [4Fe-4S] cluster serves as cofactor.

It is found in the cytoplasm. The enzyme catalyses [[Fe-S] cluster scaffold protein carrying a second [4Fe-4S](2+) cluster] + N(6)-octanoyl-L-lysyl-[protein] + 2 oxidized [2Fe-2S]-[ferredoxin] + 2 S-adenosyl-L-methionine + 4 H(+) = [[Fe-S] cluster scaffold protein] + N(6)-[(R)-dihydrolipoyl]-L-lysyl-[protein] + 4 Fe(3+) + 2 hydrogen sulfide + 2 5'-deoxyadenosine + 2 L-methionine + 2 reduced [2Fe-2S]-[ferredoxin]. The protein operates within protein modification; protein lipoylation via endogenous pathway; protein N(6)-(lipoyl)lysine from octanoyl-[acyl-carrier-protein]: step 2/2. In terms of biological role, catalyzes the radical-mediated insertion of two sulfur atoms into the C-6 and C-8 positions of the octanoyl moiety bound to the lipoyl domains of lipoate-dependent enzymes, thereby converting the octanoylated domains into lipoylated derivatives. This chain is Lipoyl synthase, found in Rickettsia bellii (strain OSU 85-389).